A 395-amino-acid chain; its full sequence is ATP phosphoribosyltransferase regulatory subunit (395 aa).

This sequence belongs to the class-II aminoacyl-tRNA synthetase family. HisZ subfamily. In terms of assembly, heteromultimer composed of HisG and HisZ subunits.

The protein resides in the cytoplasm. Its pathway is amino-acid biosynthesis; L-histidine biosynthesis; L-histidine from 5-phospho-alpha-D-ribose 1-diphosphate: step 1/9. Required for the first step of histidine biosynthesis. May allow the feedback regulation of ATP phosphoribosyltransferase activity by histidine. The sequence is that of ATP phosphoribosyltransferase regulatory subunit from Pseudomonas fluorescens (strain Pf0-1).